Consider the following 313-residue polypeptide: Phenylalanine-4-hydroxylase (313 aa).

Fe cation is bound by residues histidine 154, histidine 159, and glutamate 200.

This sequence belongs to the biopterin-dependent aromatic amino acid hydroxylase family. The cofactor is Fe(2+).

It carries out the reaction (6R)-L-erythro-5,6,7,8-tetrahydrobiopterin + L-phenylalanine + O2 = (4aS,6R)-4a-hydroxy-L-erythro-5,6,7,8-tetrahydrobiopterin + L-tyrosine. Its pathway is amino-acid degradation; L-phenylalanine degradation; acetoacetate and fumarate from L-phenylalanine: step 1/6. The protein is Phenylalanine-4-hydroxylase (phhA) of Ralstonia nicotianae (strain ATCC BAA-1114 / GMI1000) (Ralstonia solanacearum).